The primary structure comprises 288 residues: 4-diphosphocytidyl-2-C-methyl-D-erythritol kinase (288 aa).

Lysine 13 is an active-site residue. Residue 96-106 (PMGGGIGGGSS) coordinates ATP. Aspartate 138 is a catalytic residue.

The protein belongs to the GHMP kinase family. IspE subfamily.

The enzyme catalyses 4-CDP-2-C-methyl-D-erythritol + ATP = 4-CDP-2-C-methyl-D-erythritol 2-phosphate + ADP + H(+). The protein operates within isoprenoid biosynthesis; isopentenyl diphosphate biosynthesis via DXP pathway; isopentenyl diphosphate from 1-deoxy-D-xylulose 5-phosphate: step 3/6. In terms of biological role, catalyzes the phosphorylation of the position 2 hydroxy group of 4-diphosphocytidyl-2C-methyl-D-erythritol. The polypeptide is 4-diphosphocytidyl-2-C-methyl-D-erythritol kinase (Aliivibrio fischeri (strain MJ11) (Vibrio fischeri)).